The sequence spans 162 residues: Ribose-5-phosphate isomerase B (162 aa).

D-ribulose 5-phosphate is bound by residues 11-12 and 70-74; these read DH and GSGNG. Glutamate 75 serves as the catalytic Proton acceptor. Histidine 102 serves as the catalytic Proton donor. Residues asparagine 103, arginine 113, arginine 137, and arginine 141 each contribute to the D-ribulose 5-phosphate site.

This sequence belongs to the LacAB/RpiB family. As to quaternary structure, homodimer.

The enzyme catalyses aldehydo-D-ribose 5-phosphate = D-ribulose 5-phosphate. It functions in the pathway carbohydrate degradation; pentose phosphate pathway; D-ribose 5-phosphate from D-ribulose 5-phosphate (non-oxidative stage): step 1/1. Its function is as follows. Catalyzes the interconversion of ribulose-5-P and ribose-5-P. The protein is Ribose-5-phosphate isomerase B of Mycobacterium leprae (strain TN).